The primary structure comprises 173 residues: dCTP deaminase, dUMP-forming (173 aa).

Residues 93–98 (RSSTGR), Asp-111, 119–121 (TLE), Gln-138, and Tyr-151 each bind dCTP. Glu-121 (proton donor/acceptor) is an active-site residue.

This sequence belongs to the dCTP deaminase family. As to quaternary structure, homotrimer.

It carries out the reaction dCTP + 2 H2O = dUMP + NH4(+) + diphosphate. Its pathway is pyrimidine metabolism; dUMP biosynthesis; dUMP from dCTP: step 1/1. In terms of biological role, bifunctional enzyme that catalyzes both the deamination of dCTP to dUTP and the hydrolysis of dUTP to dUMP without releasing the toxic dUTP intermediate. In Clostridium beijerinckii (strain ATCC 51743 / NCIMB 8052) (Clostridium acetobutylicum), this protein is dCTP deaminase, dUMP-forming.